The primary structure comprises 311 residues: tRNA-cytidine(32) 2-sulfurtransferase (311 aa).

Residues 47-52 carry the PP-loop motif motif; the sequence is SGGKDS. Cys122, Cys125, and Cys213 together coordinate [4Fe-4S] cluster.

The protein belongs to the TtcA family. Homodimer. The cofactor is Mg(2+). [4Fe-4S] cluster is required as a cofactor.

The protein resides in the cytoplasm. The enzyme catalyses cytidine(32) in tRNA + S-sulfanyl-L-cysteinyl-[cysteine desulfurase] + AH2 + ATP = 2-thiocytidine(32) in tRNA + L-cysteinyl-[cysteine desulfurase] + A + AMP + diphosphate + H(+). The protein operates within tRNA modification. In terms of biological role, catalyzes the ATP-dependent 2-thiolation of cytidine in position 32 of tRNA, to form 2-thiocytidine (s(2)C32). The sulfur atoms are provided by the cysteine/cysteine desulfurase (IscS) system. The protein is tRNA-cytidine(32) 2-sulfurtransferase of Salmonella typhimurium (strain LT2 / SGSC1412 / ATCC 700720).